Consider the following 158-residue polypeptide: Disulfide bond formation protein B (158 aa).

Topologically, residues 1–7 (MKNSRPV) are cytoplasmic. Residues 8 to 24 (LFAVALASLLLLAVALY) form a helical membrane-spanning segment. The Periplasmic segment spans residues 25–42 (LQHVENMLPCPLCVIQRY). Cys-34 and Cys-37 are oxidised to a cystine. Residues 43–57 (AFAAIALICLVTAFR) form a helical membrane-spanning segment. The Cytoplasmic segment spans residues 58-63 (TEVTAR). Residues 64 to 81 (IGAALAALASLAGAGVAG) form a helical membrane-spanning segment. The Periplasmic segment spans residues 82–136 (WHIYIKAHPTVSCGIDPLETSLNTIPTAKLLPFLLQADGLCTTEYAPIMGLSIPQ). A disulfide bridge links Cys-94 with Cys-122. A helical membrane pass occupies residues 137 to 155 (WALVWFIVIALFLLHTAFR). Topologically, residues 156 to 158 (KKS) are cytoplasmic.

Belongs to the DsbB family.

The protein localises to the cell inner membrane. Functionally, required for disulfide bond formation in some periplasmic proteins. Acts by oxidizing the DsbA protein. This chain is Disulfide bond formation protein B, found in Herminiimonas arsenicoxydans.